Here is an 89-residue protein sequence, read N- to C-terminus: Small ribosomal subunit protein uS15 (89 aa).

This sequence belongs to the universal ribosomal protein uS15 family. Part of the 30S ribosomal subunit. Forms a bridge to the 50S subunit in the 70S ribosome, contacting the 23S rRNA.

In terms of biological role, one of the primary rRNA binding proteins, it binds directly to 16S rRNA where it helps nucleate assembly of the platform of the 30S subunit by binding and bridging several RNA helices of the 16S rRNA. Its function is as follows. Forms an intersubunit bridge (bridge B4) with the 23S rRNA of the 50S subunit in the ribosome. The chain is Small ribosomal subunit protein uS15 from Buchnera aphidicola subsp. Cinara cedri (strain Cc).